Reading from the N-terminus, the 394-residue chain is Obg-like ATPase 1 (394 aa).

Residues 25–282 (LKIGIVGLPN…MPPDEAAKYC (258 aa)) form the OBG-type G domain. ATP is bound by residues 34 to 39 (NVGKST), 56 to 60 (FCTID), and 94 to 97 (DIAG). The Mg(2+) site is built by Ser-38 and Thr-58. Residue Phe-129 participates in GTP binding. ATP is bound by residues 230–231 (NM), Met-231, and 263–265 (SCA). 263-265 (SCA) contacts GTP. One can recognise a TGS domain in the interval 303-386 (HLIYFFTAGP…QDADIIFFKF (84 aa)).

It belongs to the TRAFAC class OBG-HflX-like GTPase superfamily. OBG GTPase family. YchF/OLA1 subfamily. As to quaternary structure, monomer (Potential). Interacts with GAP1. Requires Mg(2+) as cofactor.

The protein localises to the cytoplasm. It is found in the cell membrane. The protein resides in the cytosol. With respect to regulation, activated by GAP1. Hydrolyzes ATP, and can also hydrolyze GTP with lower efficiency. Has lower affinity for GTP (Potential). Exhibits GTPase activity. Exhibits similar binding affinities and hydrolytic activities toward both GTP and ATP. Binds to the 26 S ribosomal RNA in vitro, but not to the 5.8 S or 18 S rRNA. Confers sensitivity to salinity stress by suppressing the anti-oxidation enzymatic activities and increasing lipid peroxidation thus leading to the accumulation of reactive oxygen species (ROS). This chain is Obg-like ATPase 1, found in Oryza sativa subsp. indica (Rice).